A 490-amino-acid polypeptide reads, in one-letter code: Hydroxysteroid dehydrogenase-like protein 2 (490 aa).

Residues 17-23, lysine 42, and aspartate 74 each bind NADP(+); that span reads GASRGIG. Lysine 42 carries the N6-(2-hydroxyisobutyryl)lysine modification. Lysine 116 carries the post-translational modification N6-acetyllysine. The active-site Proton acceptor is the tyrosine 168. Lysine 172 is an NADP(+) binding site. Positions 282–301 are enriched in basic and acidic residues; sequence MEEKESNDSVPEVKEEKLQL. The interval 282–370 is disordered; sequence MEEKESNDSV…PRQQPQPFVQ (89 aa). Over residues 302-367 the composition is skewed to low complexity; that stretch reads QEESQLQKQP…QPRPRQQPQP (66 aa). The SCP2 domain occupies 380–487; it reads GAVEETFRIV…KLEKLMTQMN (108 aa). N6-succinyllysine is present on lysine 390.

Belongs to the short-chain dehydrogenases/reductases (SDR) family. As to expression, widely expressed.

It localises to the peroxisome. It is found in the mitochondrion. Its function is as follows. Has apparently no steroid dehydrogenase activity. Controls bile acid (BA) and lipid metabolism in response to nutritional cues. This chain is Hydroxysteroid dehydrogenase-like protein 2 (Hsdl2), found in Mus musculus (Mouse).